We begin with the raw amino-acid sequence, 840 residues long: Sorting nexin-25 (840 aa).

The PXA domain maps to 1 to 164 (MDRVLRDVFD…MLLRQLEYRE (164 aa)). The 115-residue stretch at 287–401 (QFEDIMTNPF…LVSDLYEKLM (115 aa)) folds into the RGS domain. The segment at 404 to 437 (EEEEEPDAQLASEKDELGSGGEAGEEAVEGTSGV) is disordered. Residues 446–494 (IKLRELNEKLEYKRQALSSIQNAPKPDKKIISKLKDEILLIEKECTALQ) are a coiled coil. In terms of domain architecture, PX spans 508–628 (GLWRASITSA…AFLSPSPDYL (121 aa)). Serine 665 is modified (phosphoserine).

The protein belongs to the sorting nexin family.

Its subcellular location is the endosome membrane. Functionally, may be involved in several stages of intracellular trafficking. The sequence is that of Sorting nexin-25 (Snx25) from Mus musculus (Mouse).